A 29-amino-acid chain; its full sequence is U1-pseudomyrmecitoxin-Pt1 subunit SS2 (29 aa).

Belongs to the myrmexin family. Heterodimer composed of subunit SS2 and subunit LS1 (U1-PSDTX-Pt1e), and heterodimer composed of subunit SS2 and LS2 (U1-PSDTX-Pt1c); disulfide-linked. In terms of tissue distribution, expressed by the venom gland.

It is found in the secreted. This heterodimer may have anti-inflammatory properties, since the myrmexin complex (composed of 6 SS-LS heterodimers) inhibits carrageenin-induced edema in a dose-dependent manner (after subcutaneous injection into rats). The chain is U1-pseudomyrmecitoxin-Pt1 subunit SS2 from Pseudomyrmex triplarinus (Ant).